A 311-amino-acid chain; its full sequence is R2-like ligand binding oxidase (311 aa).

Mn(2+) contacts are provided by E68, E101, and H104. The 3-(O4'-tyrosyl)-valine (Val-Tyr) cross-link spans 71-162; sequence VTQDIQPFMA…AAQVRASVTY (92 aa). E101 serves as a coordination point for Fe cation. Residues E167, E202, and H205 each contribute to the Fe cation site.

Belongs to the ribonucleoside diphosphate reductase small chain family. R2-like ligand binding oxidase subfamily. In terms of assembly, homodimer. Fe cation serves as cofactor. It depends on Mn(2+) as a cofactor.

Probable oxidase that might be involved in lipid metabolism. This chain is R2-like ligand binding oxidase, found in Mycobacterium avium (strain 104).